A 333-amino-acid chain; its full sequence is Glyoxylate reductase (333 aa).

NADP(+) is bound by residues 158 to 161, 180 to 182, and 239 to 241; these read FGRI, SRS, and IAR. Active-site residues include Arg-241 and Glu-270. The Proton donor role is filled by His-288. Position 288-290 (288-290) interacts with NADP(+); it reads HIG.

Belongs to the D-isomer specific 2-hydroxyacid dehydrogenase family. GyaR subfamily. In terms of assembly, homodimer.

It localises to the cytoplasm. It carries out the reaction glycolate + NAD(+) = glyoxylate + NADH + H(+). The polypeptide is Glyoxylate reductase (Thermococcus kodakarensis (strain ATCC BAA-918 / JCM 12380 / KOD1) (Pyrococcus kodakaraensis (strain KOD1))).